The primary structure comprises 451 residues: UPF0210 protein NMC1568 (451 aa).

Belongs to the UPF0210 family. Homodimer.

This chain is UPF0210 protein NMC1568, found in Neisseria meningitidis serogroup C / serotype 2a (strain ATCC 700532 / DSM 15464 / FAM18).